Here is a 247-residue protein sequence, read N- to C-terminus: 2-dehydro-3-deoxy-phosphogluconate aldolase (247 aa).

The protein belongs to the DagF family.

It carries out the reaction 2-dehydro-3-deoxy-6-phospho-D-gluconate = D-glyceraldehyde 3-phosphate + pyruvate. Its function is as follows. Involved in the catabolism of D-glucosaminate. Catalyzes the conversion of keto-3-deoxygluconate 6-phosphate (KDGP) to yield pyruvate and glyceraldehyde-3-phosphate. In Salmonella typhimurium (strain 14028s / SGSC 2262), this protein is 2-dehydro-3-deoxy-phosphogluconate aldolase.